The primary structure comprises 77 residues: Conotoxin ArMSGL-0141 (77 aa).

The first 18 residues, 1 to 18, serve as a signal peptide directing secretion; it reads MSGLGILVLTLLLLVYMA. The propeptide occupies 19-44; the sequence is TSHQDAGEKQATQRDAINVRRRRSLT. Intrachain disulfides connect Cys-51/Cys-63, Cys-55/Cys-71, and Cys-62/Cys-75. A Phenylalanine amide modification is found at Phe-76.

This sequence belongs to the conotoxin O3 superfamily. As to expression, expressed by the venom duct.

It localises to the secreted. This is Conotoxin ArMSGL-0141 from Conus arenatus (Sand-dusted cone).